A 957-amino-acid chain; its full sequence is MTQTLSQLENRGAFIERHIGPDAAQQQEMLNAVGAESLNALTGQIVPKDIQLATPPQVGEAATEYAALAELKAIAGRNKRFTSYIGMGYTAVQLPPVILRNMLENPGWYTAYTPYQPEVSQGRLEALLNFQQITLDLTGLDMASASLLDEATAAAEAMAMAKRVSKLKNANRFFVASDVHPQTLDVVRTRAETFGFDVIVDDAAKALDHQDVFGVLLQQVGTTGEIHDYGALISELKARKVIVSVAADFMALVLLTAPGKQGADIVFGSAQRFGVPMGYGGPHAAFFAAKDEFKRSMPGRIIGVSKDAAGNTALRMAMQTREQHIRREKANSNICTSQVLLANIASLYAVYHGPVGLKRIANRIHRLTDILAAGLQQKGLKLRHAHYFDTLCVEVADKAAVLARAEAAEINLRSDIHNAVGITLDETTTRENVAQLFNVLLGDSHGLNIETLDKDVALDSRSIQQSMLRDDAILTHPVFNRYHSETEMMRYMHSLERKDLALNQAMIPLGSCTMKLNAAAEMIPITWPEFAELHPFCPPEQAEGYHQMISQLSDWLVKLTGYDAVCMQPNSGAQGEYAGLLAIRHYHESRNEGHRDICLIPASAHGTNPASAHMAGMQVVVVACDKNGNIDLDDLRAKAEQHAANLSCIMVTYPSTHGVYEETIREVCEVVHQFGGQVYLDGANMNAQVGITSPGFIGADVSHLNLHKTFCIPHGGGGPGMGPIGVKAHLAPFVPGHSVVQIEGMLTRQGAVSAAPFGSASILPISWMYIRMMGAEGLKQASQVAILNANYIASRLKDAYPVLYTGRDGRVAHECILDIRPLKEETGISELDIAKRLIDYGFHAPTMSFPVAGTLMVEPTESEGKAELDRFIDAMLAIRAEIDQVKAGVWPLEDNPLVNAPHIQSELVAEWAHPYSREVAVFPAGVADKYWPTVKRLDDVYGDRNLFCSCVPISDYQ.

Lys708 bears the N6-(pyridoxal phosphate)lysine mark.

This sequence belongs to the GcvP family. In terms of assembly, the glycine cleavage system is composed of four proteins: P, T, L and H. Pyridoxal 5'-phosphate is required as a cofactor.

The enzyme catalyses N(6)-[(R)-lipoyl]-L-lysyl-[glycine-cleavage complex H protein] + glycine + H(+) = N(6)-[(R)-S(8)-aminomethyldihydrolipoyl]-L-lysyl-[glycine-cleavage complex H protein] + CO2. In terms of biological role, the glycine cleavage system catalyzes the degradation of glycine. The P protein binds the alpha-amino group of glycine through its pyridoxal phosphate cofactor; CO(2) is released and the remaining methylamine moiety is then transferred to the lipoamide cofactor of the H protein. The sequence is that of Glycine dehydrogenase (decarboxylating) from Salmonella paratyphi B (strain ATCC BAA-1250 / SPB7).